A 125-amino-acid chain; its full sequence is Oxytocin-neurophysin 1 (125 aa).

Residues 1 to 19 (MACPSLACCLLGLLALTSA) form the signal peptide. A disulfide bridge links C20 with C25. G28 is subject to Glycine amide. 7 disulfide bridges follow: C41–C85, C44–C58, C52–C75, C59–C65, C92–C104, C98–C116, and C105–C110.

This sequence belongs to the vasopressin/oxytocin family. As to quaternary structure, interacts with oxytocin receptor (Ki=1.5 nM). Interacts with vasopressin V1aR/AVPR1A (Ki=37 nM), V1bR/AVPR1B (Ki=222 nM), and V2R/AVPR2 receptors (Ki=823 nM).

Neurophysin 1 specifically binds oxytocin. Its function is as follows. Oxytocin causes contraction of the smooth muscle of the uterus and of the mammary gland. Acts by binding to oxytocin receptor (OXTR). The chain is Oxytocin-neurophysin 1 (Oxt) from Rattus norvegicus (Rat).